The sequence spans 138 residues: Basic phospholipase A2 PLA-N (138 aa).

The first 16 residues, 1-16 (MRTLWIMAVLLVGVEG), serve as a signal peptide directing secretion. 7 disulfide bridges follow: C42-C131, C44-C60, C59-C111, C65-C138, C66-C104, C73-C97, and C91-C102. Ca(2+) is bound by residues Y43, G45, and G47. The active site involves H63. Ca(2+) is bound at residue D64. Residue D105 is part of the active site.

Belongs to the phospholipase A2 family. Group II subfamily. D49 sub-subfamily. Requires Ca(2+) as cofactor. Expressed by the venom gland.

The protein resides in the secreted. It catalyses the reaction a 1,2-diacyl-sn-glycero-3-phosphocholine + H2O = a 1-acyl-sn-glycero-3-phosphocholine + a fatty acid + H(+). Functionally, snake venom phospholipase A2 (PLA2) that displays edema-inducing activities, as well as presynaptic neurotoxicity and myotoxicity. PLA2 catalyzes the calcium-dependent hydrolysis of the 2-acyl groups in 3-sn-phosphoglycerides. This Protobothrops flavoviridis (Habu) protein is Basic phospholipase A2 PLA-N.